The chain runs to 377 residues: Queuine tRNA-ribosyltransferase (377 aa).

The Proton acceptor role is filled by D89. Substrate contacts are provided by residues 89-93 (DSGGF), D143, Q188, and G215. Residues 246-252 (GVGKPED) are RNA binding. D265 (nucleophile) is an active-site residue. Positions 270-274 (TRNAR) are RNA binding; important for wobble base 34 recognition. Residues C303, C305, C308, and H334 each contribute to the Zn(2+) site.

Belongs to the queuine tRNA-ribosyltransferase family. Homodimer. Within each dimer, one monomer is responsible for RNA recognition and catalysis, while the other monomer binds to the replacement base PreQ1. The cofactor is Zn(2+).

The enzyme catalyses 7-aminomethyl-7-carbaguanine + guanosine(34) in tRNA = 7-aminomethyl-7-carbaguanosine(34) in tRNA + guanine. The protein operates within tRNA modification; tRNA-queuosine biosynthesis. Functionally, catalyzes the base-exchange of a guanine (G) residue with the queuine precursor 7-aminomethyl-7-deazaguanine (PreQ1) at position 34 (anticodon wobble position) in tRNAs with GU(N) anticodons (tRNA-Asp, -Asn, -His and -Tyr). Catalysis occurs through a double-displacement mechanism. The nucleophile active site attacks the C1' of nucleotide 34 to detach the guanine base from the RNA, forming a covalent enzyme-RNA intermediate. The proton acceptor active site deprotonates the incoming PreQ1, allowing a nucleophilic attack on the C1' of the ribose to form the product. After dissociation, two additional enzymatic reactions on the tRNA convert PreQ1 to queuine (Q), resulting in the hypermodified nucleoside queuosine (7-(((4,5-cis-dihydroxy-2-cyclopenten-1-yl)amino)methyl)-7-deazaguanosine). This Acinetobacter baumannii (strain ACICU) protein is Queuine tRNA-ribosyltransferase.